Reading from the N-terminus, the 82-residue chain is Diphthamide biosynthesis protein 3 (82 aa).

A DPH-type MB domain is found at 4–60 (FHDEVEIEDFQYDEDSETYFYPCPCGDNFAITKEDLENGEDVATCPSCSLIIKVIYD). Residues C26, C28, C48, and C51 each contribute to the Fe cation site.

The protein belongs to the DPH3 family. As to quaternary structure, component of the 2-(3-amino-3-carboxypropyl)histidine synthase complex composed of DPH1, DPH2, DPH3 and a NADH-dependent reductase. Interacts with SERGEF. Fe(2+) is required as a cofactor. Widely expressed with highest levels in heart, liver, kidney and testis.

It localises to the cytoplasm. The protein localises to the nucleus. It catalyses the reaction [3Fe-4S](1+)-[protein] + Fe(2+)-[Dph3] = [3Fe-4S](0)-[protein] + Fe(3+)-[Dph3]. The enzyme catalyses 2 [3Fe-4S](0)-[protein] + 2 Fe(2+)-[Dph3] + NADH = 2 [4Fe-4S](1+)-[protein] + 2 [Dph3] + NAD(+) + H(+). Its pathway is protein modification; peptidyl-diphthamide biosynthesis. In terms of biological role, required for the first step of diphthamide biosynthesis, a post-translational modification of histidine which occurs in elongation factor 2. DPH1 and DPH2 transfer a 3-amino-3-carboxypropyl (ACP) group from S-adenosyl-L-methionine (SAM) to a histidine residue, the reaction is assisted by a reduction system comprising DPH3 and a NADH-dependent reductase. Acts as an electron donor to reduce the Fe-S cluster in DPH1-DPH2 keeping the [4Fe-4S] clusters in the active and reduced state. Restores iron to DPH1-DPH2 iron-sulfur clusters which have degraded from [4Fe-4S] to [3Fe-4S] by donating an iron atom to reform [4Fe-4S] clusters, in a manner dependent on the presence of elongation factor 2 and SAM. Associates with the elongator complex and is required for tRNA Wobble base modifications mediated by the elongator complex. The elongator complex is required for multiple tRNA modifications, including mcm5U (5-methoxycarbonylmethyl uridine), mcm5s 2U (5-methoxycarbonylmethyl-2-thiouridine), and ncm5U (5-carbamoylmethyl uridine). The protein is Diphthamide biosynthesis protein 3 of Mus musculus (Mouse).